A 360-amino-acid polypeptide reads, in one-letter code: Phospho-N-acetylmuramoyl-pentapeptide-transferase (360 aa).

Transmembrane regions (helical) follow at residues 25–45 (RAILSVLTALGISLLLGPWVI), 74–94 (MGGALILSAMFISTLLWSDFG), 97–117 (YVWVVLIVTAIFGAVGWVDDY), 134–154 (YFWQSIAGFGAAVFLFCTAQA), 168–188 (VALNMGLFYIIFTYFVIVGTS), 199–219 (GLAIMPSVMVAGALALIAYLA), 236–256 (AGELAVFCCALVGAGLGFLWF), 263–283 (VFMGDVGALALGAALGLVAVI), 288–308 (FVLFIMGGIFVLETVSVILQV), and 339–359 (IVRFWIITLVLVLIGLATLKF).

The protein belongs to the glycosyltransferase 4 family. MraY subfamily. Mg(2+) is required as a cofactor.

The protein localises to the cell inner membrane. The enzyme catalyses UDP-N-acetyl-alpha-D-muramoyl-L-alanyl-gamma-D-glutamyl-meso-2,6-diaminopimeloyl-D-alanyl-D-alanine + di-trans,octa-cis-undecaprenyl phosphate = di-trans,octa-cis-undecaprenyl diphospho-N-acetyl-alpha-D-muramoyl-L-alanyl-D-glutamyl-meso-2,6-diaminopimeloyl-D-alanyl-D-alanine + UMP. It functions in the pathway cell wall biogenesis; peptidoglycan biosynthesis. Catalyzes the initial step of the lipid cycle reactions in the biosynthesis of the cell wall peptidoglycan: transfers peptidoglycan precursor phospho-MurNAc-pentapeptide from UDP-MurNAc-pentapeptide onto the lipid carrier undecaprenyl phosphate, yielding undecaprenyl-pyrophosphoryl-MurNAc-pentapeptide, known as lipid I. In Cellvibrio japonicus (strain Ueda107) (Pseudomonas fluorescens subsp. cellulosa), this protein is Phospho-N-acetylmuramoyl-pentapeptide-transferase.